We begin with the raw amino-acid sequence, 249 residues long: BPI fold-containing family A member 2 (249 aa).

The first 18 residues, 1–18, serve as a signal peptide directing secretion; sequence MLQLWKLVLLCGVLTGTS. 2 N-linked (GlcNAc...) asparagine glycosylation sites follow: Asn124 and Asn132. The cysteines at positions 174 and 217 are disulfide-linked.

This sequence belongs to the BPI/LBP/Plunc superfamily. Plunc family. Detected in submandibular gland. Secreted into saliva.

The protein localises to the secreted. In terms of biological role, has strong antibacterial activity against P.aeruginosa. In Homo sapiens (Human), this protein is BPI fold-containing family A member 2 (BPIFA2).